Reading from the N-terminus, the 490-residue chain is Glutamate--tRNA ligase (490 aa).

The 'HIGH' region signature appears at 13 to 23 (PSPTGTPHVGL). Positions 257 to 261 (KLSKR) match the 'KMSKS' region motif. Lys-260 contacts ATP.

This sequence belongs to the class-I aminoacyl-tRNA synthetase family. Glutamate--tRNA ligase type 1 subfamily. Monomer.

It is found in the cytoplasm. The catalysed reaction is tRNA(Glu) + L-glutamate + ATP = L-glutamyl-tRNA(Glu) + AMP + diphosphate. Functionally, catalyzes the attachment of glutamate to tRNA(Glu) in a two-step reaction: glutamate is first activated by ATP to form Glu-AMP and then transferred to the acceptor end of tRNA(Glu). This is Glutamate--tRNA ligase from Mycobacterium bovis (strain BCG / Pasteur 1173P2).